The following is a 560-amino-acid chain: Endogenous retrovirus group K member 18 Env polyprotein (560 aa).

The tract at residues 355–375 (FIFTLIAVIMGLIAVTATAAV) is fusion peptide. A helical transmembrane segment spans residues 522–542 (IRSTMIINLILIVVCLFCLLL).

Belongs to the beta type-B retroviral envelope protein family. HERV class-II K(HML-2) env subfamily. In terms of assembly, the surface (SU) and transmembrane (TM) proteins form a heterodimer. SU and TM are attached by noncovalent interactions or by a labile interchain disulfide bond. In terms of processing, specific enzymatic cleavages in vivo yield the mature SU and TM proteins. As to expression, expressed at higher level in the thymus. Expressed at lower level in peripheral blood lymphocytes.

The protein resides in the cell membrane. The protein localises to the virion. Functionally, retroviral envelope proteins mediate receptor recognition and membrane fusion during early infection. Endogenous envelope proteins may have kept, lost or modified their original function during evolution. This envelope protein has superantigenic properties. Its function is as follows. SU mediates receptor recognition. TM anchors the envelope heterodimer to the viral membrane through one transmembrane domain. The other hydrophobic domain, called fusion peptide, mediates fusion of the viral membrane with the target cell membrane. The chain is Endogenous retrovirus group K member 18 Env polyprotein (ERVK-18) from Homo sapiens (Human).